We begin with the raw amino-acid sequence, 617 residues long: Ceramide transfer protein (617 aa).

Residues 1–11 (MSDNQSWNSSG) show a composition bias toward polar residues. Residues 1–23 (MSDNQSWNSSGSEEDLETESGPP) are disordered. A PH domain is found at 23–117 (PVERCGVLSK…WIDSIEQHKS (95 aa)). The stretch at 268 to 302 (REDSWQKRLDKEIEKRRRVEEAYKNAMTELKKKSH) forms a coiled coil. The FFAT signature appears at 320–326 (EFFDAVE). Residues 332–344 (QDKIEQSQSEKGR) show a composition bias toward basic and acidic residues. Residues 332 to 355 (QDKIEQSQSEKGRSHWPSSLPSTE) are disordered. One can recognise an START domain in the interval 383–611 (DEHRFRIQVE…FTSYVQEKTA (229 aa)). Residues Glu466, Gln487, Asn524, and Tyr572 each contribute to the an N-acylsphing-4-enine site.

The protein localises to the cytoplasm. Its subcellular location is the golgi apparatus. The protein resides in the endoplasmic reticulum. The enzyme catalyses N-hexadecanoylsphing-4-enine(in) = N-hexadecanoylsphing-4-enine(out). May mediate the intracellular trafficking of ceramide in a non-vesicular manner. In Xenopus tropicalis (Western clawed frog), this protein is Ceramide transfer protein (cert1).